We begin with the raw amino-acid sequence, 297 residues long: Guanylate kinase (297 aa).

A Guanylate kinase-like domain is found at 4-183 (GKMIIISGPS…AVAKITDVLH (180 aa)). 11-18 (GPSGVGKG) is an ATP binding site. The segment at 204 to 297 (EQIVKEKYMY…EQKHYNNDEF (94 aa)) is unknown.

This sequence belongs to the guanylate kinase family.

It is found in the cytoplasm. It catalyses the reaction GMP + ATP = GDP + ADP. Functionally, essential for recycling GMP and indirectly, cGMP. The protein is Guanylate kinase (gmk) of Mycoplasma mycoides subsp. mycoides SC (strain CCUG 32753 / NCTC 10114 / PG1).